Reading from the N-terminus, the 226-residue chain is Ribosomal RNA small subunit methyltransferase G (226 aa).

S-adenosyl-L-methionine-binding positions include G95, L100, 146 to 147 (VE), and R159.

It belongs to the methyltransferase superfamily. RNA methyltransferase RsmG family.

Its subcellular location is the cytoplasm. The catalysed reaction is guanosine(527) in 16S rRNA + S-adenosyl-L-methionine = N(7)-methylguanosine(527) in 16S rRNA + S-adenosyl-L-homocysteine. Functionally, specifically methylates the N7 position of guanine in position 527 of 16S rRNA. This is Ribosomal RNA small subunit methyltransferase G from Acidovorax sp. (strain JS42).